The chain runs to 184 residues: Photosystem I assembly protein Ycf4 (184 aa).

A run of 2 helical transmembrane segments spans residues 22-42 (FCWA…GISS) and 57-77 (IIFF…LFIS).

This sequence belongs to the Ycf4 family.

It is found in the plastid. The protein localises to the chloroplast thylakoid membrane. Functionally, seems to be required for the assembly of the photosystem I complex. The polypeptide is Photosystem I assembly protein Ycf4 (Populus alba (White poplar)).